A 319-amino-acid polypeptide reads, in one-letter code: MTQDYRVLLYYQYVPIEDGESFAQKHLSDCKALGLKGRILVADEGINGTVSGTVEQTNAYMSLMKNDSRFTSTIFKIDEAKQNAFKKMHVRYRPELVNLSLEDDVNPLELTGAYLDPKEFREAMLDENTVVIDARNDYEFDLGHFRGAIRPEIRSFRELPQWIRDNKEQFMEKRVLTYCTGGIRCEKFSGWLVREGFKDVGQLHGGIATYGKDPEVQGDLWDGQMYVFDSRIAVPINQKEHVIVGRDWFDGSPCERYINCGNPECNRQMLASKENEAKYLGACSHECRVHPDNRYIKAHQLSNQEVQERLALLEKDLAS.

Positions 125–219 constitute a Rhodanese domain; sequence LDENTVVIDA…YGKDPEVQGD (95 aa). Cys179 functions as the Cysteine persulfide intermediate in the catalytic mechanism.

The protein belongs to the TrhO family.

It carries out the reaction uridine(34) in tRNA + AH2 + O2 = 5-hydroxyuridine(34) in tRNA + A + H2O. In terms of biological role, catalyzes oxygen-dependent 5-hydroxyuridine (ho5U) modification at position 34 in tRNAs. This is tRNA uridine(34) hydroxylase from Lactococcus lactis subsp. cremoris (strain MG1363).